The sequence spans 323 residues: Thioredoxin reductase (323 aa).

42–49 (YRAEADGA) is a binding site for FAD. Cysteine 143 and cysteine 146 are disulfide-bonded. 286–295 (DVLCNEVKQA) is an FAD binding site.

This sequence belongs to the class-II pyridine nucleotide-disulfide oxidoreductase family. Homodimer. The cofactor is FAD.

Its subcellular location is the cytoplasm. The enzyme catalyses [thioredoxin]-dithiol + NADP(+) = [thioredoxin]-disulfide + NADPH + H(+). The protein is Thioredoxin reductase (trxB) of Aquifex aeolicus (strain VF5).